The sequence spans 122 residues: MIQMQSYLDVADNSGAKEVMCIKVLGGSKRRYAHIGDIIKVTVKDAIPRGKVKKGEVYDAVVVRTRKGVRRPDGSLIRFDGNAAVLLNNKQEPIGTRIFGPVTRELRSEKFMKIVSLAPEVL.

The protein belongs to the universal ribosomal protein uL14 family. As to quaternary structure, part of the 50S ribosomal subunit. Forms a cluster with proteins L3 and L19. In the 70S ribosome, L14 and L19 interact and together make contacts with the 16S rRNA in bridges B5 and B8.

In terms of biological role, binds to 23S rRNA. Forms part of two intersubunit bridges in the 70S ribosome. The sequence is that of Large ribosomal subunit protein uL14 from Xanthomonas axonopodis pv. citri (strain 306).